The chain runs to 169 residues: Glutathione peroxidase (169 aa).

Sec-43 is an active-site residue. Position 43 (Sec-43) is a non-standard amino acid, selenocysteine.

It belongs to the glutathione peroxidase family.

The catalysed reaction is 2 glutathione + H2O2 = glutathione disulfide + 2 H2O. The chain is Glutathione peroxidase (GPX1) from Schistosoma mansoni (Blood fluke).